Consider the following 237-residue polypeptide: 2,3,4,5-tetrahydropyridine-2,6-dicarboxylate N-acetyltransferase (237 aa).

This sequence belongs to the transferase hexapeptide repeat family. DapH subfamily.

It catalyses the reaction (S)-2,3,4,5-tetrahydrodipicolinate + acetyl-CoA + H2O = L-2-acetamido-6-oxoheptanedioate + CoA. The protein operates within amino-acid biosynthesis; L-lysine biosynthesis via DAP pathway; LL-2,6-diaminopimelate from (S)-tetrahydrodipicolinate (acetylase route): step 1/3. Functionally, catalyzes the transfer of an acetyl group from acetyl-CoA to tetrahydrodipicolinate. This chain is 2,3,4,5-tetrahydropyridine-2,6-dicarboxylate N-acetyltransferase, found in Limosilactobacillus fermentum (strain NBRC 3956 / LMG 18251) (Lactobacillus fermentum).